The following is a 398-amino-acid chain: 1-deoxy-D-xylulose 5-phosphate reductoisomerase (398 aa).

The NADPH site is built by Thr-11, Gly-12, Ser-13, Ile-14, and Asn-125. A 1-deoxy-D-xylulose 5-phosphate-binding site is contributed by Lys-126. NADPH is bound at residue Glu-127. Asp-151 lines the Mn(2+) pocket. 1-deoxy-D-xylulose 5-phosphate-binding residues include Ser-152, Glu-153, Ser-186, and His-209. Position 153 (Glu-153) interacts with Mn(2+). Gly-215 is an NADPH binding site. The 1-deoxy-D-xylulose 5-phosphate site is built by Ser-222, Asn-227, Lys-228, and Glu-231. A Mn(2+)-binding site is contributed by Glu-231.

The protein belongs to the DXR family. The cofactor is Mg(2+). Mn(2+) serves as cofactor.

The enzyme catalyses 2-C-methyl-D-erythritol 4-phosphate + NADP(+) = 1-deoxy-D-xylulose 5-phosphate + NADPH + H(+). It functions in the pathway isoprenoid biosynthesis; isopentenyl diphosphate biosynthesis via DXP pathway; isopentenyl diphosphate from 1-deoxy-D-xylulose 5-phosphate: step 1/6. Catalyzes the NADPH-dependent rearrangement and reduction of 1-deoxy-D-xylulose-5-phosphate (DXP) to 2-C-methyl-D-erythritol 4-phosphate (MEP). The sequence is that of 1-deoxy-D-xylulose 5-phosphate reductoisomerase from Acinetobacter baylyi (strain ATCC 33305 / BD413 / ADP1).